The primary structure comprises 152 residues: SsrA-binding protein (152 aa).

It belongs to the SmpB family.

The protein localises to the cytoplasm. In terms of biological role, required for rescue of stalled ribosomes mediated by trans-translation. Binds to transfer-messenger RNA (tmRNA), required for stable association of tmRNA with ribosomes. tmRNA and SmpB together mimic tRNA shape, replacing the anticodon stem-loop with SmpB. tmRNA is encoded by the ssrA gene; the 2 termini fold to resemble tRNA(Ala) and it encodes a 'tag peptide', a short internal open reading frame. During trans-translation Ala-aminoacylated tmRNA acts like a tRNA, entering the A-site of stalled ribosomes, displacing the stalled mRNA. The ribosome then switches to translate the ORF on the tmRNA; the nascent peptide is terminated with the 'tag peptide' encoded by the tmRNA and targeted for degradation. The ribosome is freed to recommence translation, which seems to be the essential function of trans-translation. The protein is SsrA-binding protein of Rickettsia bellii (strain RML369-C).